The sequence spans 434 residues: SPARC-related modular calcium-binding protein 1 (434 aa).

An N-terminal signal peptide occupies residues 1-26 (MLPARCARLLTPHLLLVLVQLSPARG). In terms of domain architecture, Kazal-like spans 37–89 (SDRDPQCNLHCSRTQPKPICASDGRSYESMCEYQRAKCRDPTLGVVHRGRCKD). 6 cysteine pairs are disulfide-bonded: Cys43/Cys74, Cys47/Cys67, Cys56/Cys87, Cys95/Cys118, Cys129/Cys136, and Cys138/Cys158. A Thyroglobulin type-1 1 domain is found at 92-158 (QSKCRLERAQ…SSVQNKTPVC (67 aa)). Over residues 149 to 172 (SSVQNKTPVCSGSVTDKPLSQGNS) the composition is skewed to polar residues. The interval 149-191 (SSVQNKTPVCSGSVTDKPLSQGNSGRKDDGSKPTPTMETQPVF) is disordered. N-linked (GlcNAc...) asparagine glycosylation occurs at Asn214. Positions 224-292 (VYSCDQERQS…TSTRYVMPSC (69 aa)) constitute a Thyroglobulin type-1 2 domain. 3 cysteine pairs are disulfide-bonded: Cys227-Cys251, Cys262-Cys269, and Cys271-Cys292. EF-hand domains follow at residues 359–394 (LEER…VKKK) and 396–431 (KPKK…SKEG). Ca(2+) contacts are provided by Asp372, Asn374, Ser376, Asp378, Glu383, Asp409, Asn411, Asp413, and Glu420. The N-linked (GlcNAc...) asparagine glycan is linked to Asn374.

Post-translationally, glycosylated. As to expression, widely expressed in many tissues with a strongest signal in ovary. No expression in spleen.

The protein localises to the secreted. The protein resides in the extracellular space. It is found in the extracellular matrix. Its subcellular location is the basement membrane. Plays essential roles in both eye and limb development. Probable regulator of osteoblast differentiation. The protein is SPARC-related modular calcium-binding protein 1 (SMOC1) of Homo sapiens (Human).